Consider the following 237-residue polypeptide: CDP-diacylglycerol--inositol 3-phosphatidyltransferase (237 aa).

Topologically, residues 1 to 12 are cytoplasmic; the sequence is MGKNEQKDPNVY. The chain crosses the membrane as a helical span at residues 13 to 33; that stretch reads FFVPNLIGFTRVFLVLISLYF. Residues 34 to 41 are Lumenal-facing; sequence MSWHPNYC. The chain crosses the membrane as a helical span at residues 42–62; the sequence is TIVYLYSSLLDAFDGWAARKL. Residues Asp-52 and Asp-55 each contribute to the Mg(2+) site. The a CDP-1,2-diacyl-sn-glycerol site is built by Gly-56, Arg-60, and Thr-66. Over 63–71 the chain is Cytoplasmic; the sequence is HQATNFGAI. Residues 72 to 92 traverse the membrane as a helical segment; the sequence is LDMVTDRCATSCLLCFLCAAY. Mg(2+) contacts are provided by Asp-73 and Asp-77. Residue Asp-77 is the Proton acceptor of the active site. Residues 93–94 are Lumenal-facing; sequence PK. Residues 95–115 form a helical membrane-spanning segment; the sequence is YAIIFQLLVSLDLASHYMHMY. Residues 116-144 are Cytoplasmic-facing; that stretch reads STLHQGASSHKTVTKKHNWMLRLYYGNNK. Residues 145-165 form a helical membrane-spanning segment; sequence VLFIFCAANEMFFVALYLLSF. Residues 166–185 are Lumenal-facing; that stretch reads TPRTPPKLGYLPVPSFIYST. Residues 186-206 form a helical membrane-spanning segment; it reads GELPLSYPTLLAVLCGPICLA. Over 207–237 the chain is Cytoplasmic; sequence KQIINVVQLVNAANALVKMDVEQRRAAKKLQ.

The protein belongs to the CDP-alcohol phosphatidyltransferase class-I family. Requires Mn(2+) as cofactor. Mg(2+) is required as a cofactor.

It localises to the microsome membrane. It is found in the endoplasmic reticulum membrane. The protein resides in the golgi apparatus membrane. Its subcellular location is the mitochondrion outer membrane. It catalyses the reaction a CDP-1,2-diacyl-sn-glycerol + myo-inositol = a 1,2-diacyl-sn-glycero-3-phospho-(1D-myo-inositol) + CMP + H(+). Its function is as follows. Catalyzes the synthesis of phosphatidylinositol (PtdIns). The protein is CDP-diacylglycerol--inositol 3-phosphatidyltransferase (pis1) of Schizosaccharomyces pombe (strain 972 / ATCC 24843) (Fission yeast).